We begin with the raw amino-acid sequence, 430 residues long: MTAKWEKTSGSQGVLTYEAPAEAFDKAVDAAFKTVVKDLNVPGFRKGKLPRPMFNKMYGEEALYQDALDILYRDTIQGAVEEAGFEPIALENIDVDGTLEKGKPVAFKVTFVVEPEAELGEYKGLEYEAVSTEVTEDEVTAELEALQQQGAELAVKEGAIENGDTAVFDFAGFADGEQFEGGTAENYTLEIGSGQFIPGFEEQMIGMTAGEEKDVEVTFPEEYHAENLAGKPATFKVKLHEVKTKQVPELDDEFAKDIDESVSTLDELKASIRERLEAGKKQEAEGTMRDQLVEQATANATIDVPEVLVEQEVDRMVQEFGSRVSSQGIDLNMYFELTGTSEEAMREEMKEQAEERVKARLVLKAIADKEAIEVSDEDAEKELEEMSKLYNIAPDQLRTMLAPQGGLETLKGDLKFRKAIDILVENGKAK.

Positions 163–248 (GDTAVFDFAG…LHEVKTKQVP (86 aa)) constitute a PPIase FKBP-type domain.

The protein belongs to the FKBP-type PPIase family. Tig subfamily.

Its subcellular location is the cytoplasm. The enzyme catalyses [protein]-peptidylproline (omega=180) = [protein]-peptidylproline (omega=0). In terms of biological role, involved in protein export. Acts as a chaperone by maintaining the newly synthesized protein in an open conformation. Functions as a peptidyl-prolyl cis-trans isomerase. This chain is Trigger factor, found in Exiguobacterium sp. (strain ATCC BAA-1283 / AT1b).